Consider the following 395-residue polypeptide: 3-sulfinopropanoyl-CoA desulfinase (395 aa).

Residues 121 to 124 (ICIS), Ser-130, and 153 to 156 (YWIT) each bind FAD. 243–244 (YN) provides a ligand contact to substrate. FAD contacts are provided by residues Arg-272, Gln-339, Ser-343, 366-370 (GGTAQ), and Gln-387.

Belongs to the acyl-CoA dehydrogenase family. Homotrimer or homotetramer. Requires FAD as cofactor.

It carries out the reaction 3-sulfinopropanoyl-CoA + H2O = propanoyl-CoA + sulfite + H(+). In terms of biological role, catalyzes the conversion 3-sulfinopropanoyl-CoA (3SP-CoA) to propanoyl-CoA by abstraction of sulfite. Does not show dehydrogenase activity. The chain is 3-sulfinopropanoyl-CoA desulfinase from Cupriavidus necator (strain ATCC 43291 / DSM 13513 / CCUG 52238 / LMG 8453 / N-1) (Ralstonia eutropha).